The primary structure comprises 286 residues: NAD kinase (286 aa).

Asp74 serves as the catalytic Proton acceptor. NAD(+) contacts are provided by residues Asp74 to Gly75, Asn148 to Asp149, Asp178, Ala186, Thr189 to Ser194, and Gln244.

The protein belongs to the NAD kinase family. It depends on a divalent metal cation as a cofactor.

The protein resides in the cytoplasm. The catalysed reaction is NAD(+) + ATP = ADP + NADP(+) + H(+). In terms of biological role, involved in the regulation of the intracellular balance of NAD and NADP, and is a key enzyme in the biosynthesis of NADP. Catalyzes specifically the phosphorylation on 2'-hydroxyl of the adenosine moiety of NAD to yield NADP. The protein is NAD kinase of Campylobacter jejuni subsp. jejuni serotype O:23/36 (strain 81-176).